The following is a 1669-amino-acid chain: Polycomb group protein Asx (1669 aa).

Residues 90 to 109 (IPPEKKPMAPSEEAAVSTAP) are disordered. Positions 215-338 (PDSILASTNL…FEPFWGEKNS (124 aa)) constitute a DEUBAD domain. Short sequence motifs (LXXLL motif) lie at residues 224-228 (LRALL) and 244-248 (LIQLL). Residues 283–285 (NEF) carry the NEF motif motif. Over residues 336–352 (KNSRGKDKDKLESDCKN) the composition is skewed to basic and acidic residues. Disordered stretches follow at residues 336-378 (KNSR…QQAT), 410-478 (SSTF…IVPN), 635-718 (FFTS…SAGA), 952-972 (MPHQ…QQQR), 1174-1193 (QQQS…QQQL), 1398-1437 (PGPG…PEQL), 1482-1505 (LHSI…TAGS), and 1587-1610 (SPTA…QHQH). Composition is skewed to polar residues over residues 367-378 (ATSQQKPLQQAT), 413-425 (FPPT…VLNE), and 434-450 (PSSS…TIAT). Over residues 465-474 (KDSKQPKMDE) the composition is skewed to basic and acidic residues. Low complexity predominate over residues 635-650 (FFTSSSSSNTATTAAN). The span at 651–661 (KLEEHSDKPED) shows a compositional bias: basic and acidic residues. Over residues 666 to 718 (IASSISGSTPASSITSTSCTSSSSSSASMSSSCSSSNSGSTTTAPTTSSSAGA) the composition is skewed to low complexity. 2 stretches are compositionally biased toward low complexity: residues 1174 to 1192 (QQQS…QQQQ) and 1404 to 1436 (TATA…APEQ). The segment covering 1592-1610 (PSPINQQPQSQPTGTQHQH) has biased composition (low complexity). The PHD-type; atypical zinc-finger motif lies at 1602–1666 (QPTGTQHQHP…IGAAKLCVAC (65 aa)).

It belongs to the Asx family. In terms of assembly, component of the polycomb repressive deubiquitinase (PR-DUB) complex, at least composed of caly/calypso, Asx and sba (MBD5/6 homolog). Interacts (via DEUBAD domain) with caly/calypso (via ULD domain); the interaction produces a stable heterodimer with a composite binding site for ubiquitin. Two copies of the caly-Asx heterodimer assemble into a bidentate tetramer. Interacts (via PHD domain) with sba (probably via MBD domain); the interaction is important for the stability of the PR-DUB complex. Interacts with tant. Interacts with cyclin CycG. As to expression, highly expressed in nurse cells and deposited in oocytes late in oogenesis. Ubiquitous in early embryos. Late embryos show higher levels in CNS and neurectoderm.

The protein localises to the nucleus. It localises to the chromosome. Non-catalytic component of the polycomb repressive deubiquitinase (PR-DUB) complex, a complex that specifically mediates deubiquitination of histone H2A monoubiquitinated at 'Lys-119' (H2AK118ub1). Activator of the PR-DUB complex involved in ubiquitin binding and allosteric activation of calypso deubiquitinase activity. PR-DUB does not deubiquitinate monoubiquitinated histone H2B. PR-DUB is required to maintain the transcriptionally repressive state of homeotic genes throughout development. The PR-DUB complex has weak or no activity toward 'Lys-48'- and 'Lys-63'-linked polyubiquitin chains. Atypical Polycomb group protein, which may be involved in both Polycomb group (PcG) and trithorax group (trxG) complexes. PcG and trxG proteins act by forming multiprotein complexes, which are respectively required to maintain the transcriptionally repressive and transcriptionally active state of homeotic genes throughout development. PcG and trxG protein complexes are not required to initiate repression and activation, but to maintain it during later stages of development. In Drosophila melanogaster (Fruit fly), this protein is Polycomb group protein Asx.